The sequence spans 630 residues: Very-long-chain aldehyde decarbonylase GL1-7 (630 aa).

4 helical membrane passes run L93–I113, G126–H146, F185–A205, and V325–Y345. One can recognise a Fatty acid hydroxylase domain in the interval L133–T272.

The protein belongs to the sterol desaturase family. In terms of assembly, homodimer. As to expression, expressed in panicles at low levels.

The protein resides in the endoplasmic reticulum membrane. The catalysed reaction is a long-chain fatty aldehyde + 2 NADPH + O2 + H(+) = a long-chain alkane + formate + 2 NADP(+) + H2O. In terms of biological role, aldehyde decarbonylase involved in the conversion of aldehydes to alkanes. Core component of a very-long-chain alkane synthesis complex. The protein is Very-long-chain aldehyde decarbonylase GL1-7 of Oryza sativa subsp. japonica (Rice).